We begin with the raw amino-acid sequence, 175 residues long: RNA pyrophosphohydrolase (175 aa).

Residues 6 to 149 (GYRPNVGIIL…KRQVYQQALT (144 aa)) enclose the Nudix hydrolase domain. A Nudix box motif is present at residues 38 to 59 (GGIKHGESPEQAMYRELYEEVG).

It belongs to the Nudix hydrolase family. RppH subfamily. The cofactor is a divalent metal cation.

Accelerates the degradation of transcripts by removing pyrophosphate from the 5'-end of triphosphorylated RNA, leading to a more labile monophosphorylated state that can stimulate subsequent ribonuclease cleavage. The chain is RNA pyrophosphohydrolase from Azoarcus sp. (strain BH72).